We begin with the raw amino-acid sequence, 142 residues long: Hemoglobin subunit zeta (142 aa).

An N-acetylserine modification is found at serine 2. In terms of domain architecture, Globin spans 2–142 (SLTRTERTII…VSGVLTEKYR (141 aa)). Threonine 29 carries the post-translational modification Phosphothreonine. Serine 53 is modified (phosphoserine). Histidine 59 lines the heme b pocket. Residues serine 73 and serine 82 each carry the phosphoserine modification. Histidine 88 contributes to the heme b binding site.

It belongs to the globin family. In terms of assembly, heterotetramer of two zeta chains and beta-type chains.

In terms of biological role, the zeta chain is an alpha-type chain of mammalian embryonic hemoglobin. The sequence is that of Hemoglobin subunit zeta (HBZ1) from Capra hircus (Goat).